Here is a 351-residue protein sequence, read N- to C-terminus: 3-dehydroquinate synthase (351 aa).

NAD(+)-binding positions include 126-127 (TT), Lys-138, and Lys-147. Zn(2+) is bound by residues Glu-180, His-244, and His-260.

Belongs to the sugar phosphate cyclases superfamily. Dehydroquinate synthase family. The cofactor is Co(2+). Requires Zn(2+) as cofactor. NAD(+) is required as a cofactor.

It is found in the cytoplasm. The enzyme catalyses 7-phospho-2-dehydro-3-deoxy-D-arabino-heptonate = 3-dehydroquinate + phosphate. The protein operates within metabolic intermediate biosynthesis; chorismate biosynthesis; chorismate from D-erythrose 4-phosphate and phosphoenolpyruvate: step 2/7. In terms of biological role, catalyzes the conversion of 3-deoxy-D-arabino-heptulosonate 7-phosphate (DAHP) to dehydroquinate (DHQ). This chain is 3-dehydroquinate synthase, found in Exiguobacterium sp. (strain ATCC BAA-1283 / AT1b).